Reading from the N-terminus, the 501-residue chain is Capsid protein (501 aa).

The interval S78–G98 is disordered. The Nuclear localization signal signature appears at K122–F125. The segment at C431–K448 adopts a CCHC-type zinc-finger fold.

It belongs to the caulimoviridae capsid protein family. As to quaternary structure, interacts (via nuclear localization signal) with host importin alpha.

It localises to the virion. Its subcellular location is the host nucleus. Its function is as follows. Self assembles to form an icosahedral capsid, about 50 nm in diameter, nm, composed of 420 subunits of the viral capsid protein. The capsid encapsulates the genomic dsDNA. Following virus entry into host cell, provides nuclear import of the viral genome. Virus particles do not enter the nucleus, but dock at the nuclear membrane through the interaction with host importins. This Cestrum parqui (CmYLCV) protein is Capsid protein.